We begin with the raw amino-acid sequence, 202 residues long: Inner membrane-spanning protein YciB (202 aa).

Transmembrane regions (helical) follow at residues 47–67 (ILLATVVVIAATVAQIIWVHF), 75–95 (MLWVSLVLVVVFGGLTLAFQN), 101–121 (WKPTILYWVFAGSMIFSAFIL), 146–166 (LSWIGFFLFMGALNLFVAFNF), and 174–194 (FKLFGGMGLMLVFVLGQGMLL).

The protein belongs to the YciB family.

The protein resides in the cell inner membrane. In terms of biological role, plays a role in cell envelope biogenesis, maintenance of cell envelope integrity and membrane homeostasis. This Dechloromonas aromatica (strain RCB) protein is Inner membrane-spanning protein YciB.